Consider the following 548-residue polypeptide: Chaperonin GroEL 2 (548 aa).

Residues threonine 30–proline 33, lysine 51, aspartate 87–threonine 91, glycine 415, and aspartate 496 contribute to the ATP site. Residues lysine 529–phenylalanine 548 are disordered. Over residues glycine 538–phenylalanine 548 the composition is skewed to gly residues.

The protein belongs to the chaperonin (HSP60) family. Forms a cylinder of 14 subunits composed of two heptameric rings stacked back-to-back. Interacts with the co-chaperonin GroES.

It localises to the cytoplasm. The catalysed reaction is ATP + H2O + a folded polypeptide = ADP + phosphate + an unfolded polypeptide.. Together with its co-chaperonin GroES, plays an essential role in assisting protein folding. The GroEL-GroES system forms a nano-cage that allows encapsulation of the non-native substrate proteins and provides a physical environment optimized to promote and accelerate protein folding. The sequence is that of Chaperonin GroEL 2 from Rhodospirillum rubrum (strain ATCC 11170 / ATH 1.1.1 / DSM 467 / LMG 4362 / NCIMB 8255 / S1).